The sequence spans 387 residues: Cysteine desulfurase (387 aa).

Pyridoxal 5'-phosphate-binding positions include 72-73, Asn152, Gln180, and 200-202; these read GT and SAH. Residue Lys203 is modified to N6-(pyridoxal phosphate)lysine. Residue Thr238 coordinates pyridoxal 5'-phosphate. Cys326 serves as the catalytic Cysteine persulfide intermediate. Cys326 serves as a coordination point for [2Fe-2S] cluster.

This sequence belongs to the class-V pyridoxal-phosphate-dependent aminotransferase family. NifS/IscS subfamily. Homodimer. Requires pyridoxal 5'-phosphate as cofactor.

The catalysed reaction is (sulfur carrier)-H + L-cysteine = (sulfur carrier)-SH + L-alanine. Its function is as follows. Catalyzes the removal of elemental sulfur atoms from cysteine to produce alanine. Seems to participate in the biosynthesis of the nitrogenase metalloclusters by providing the inorganic sulfur required for the Fe-S core formation. In Sinorhizobium fredii (strain NBRC 101917 / NGR234), this protein is Cysteine desulfurase.